Reading from the N-terminus, the 460-residue chain is Nucleosome assembly protein 1-like 2 (460 aa).

2 stretches are compositionally biased toward basic and acidic residues: residues 1-11 (MAESENRKELS) and 27-36 (LGEHLERGED). Disordered regions lie at residues 1–88 (MAES…ADRP) and 214–238 (EEEE…EDPK). Acidic residues predominate over residues 214–236 (EEEEEEEEDDIEATGEENKEEED). The short motif at 346–352 (IKKKQKH) is the Nuclear localization signal element.

Belongs to the nucleosome assembly protein (NAP) family.

The protein resides in the nucleus. Its function is as follows. Acidic protein which may be involved in interactions with other proteins or DNA. In Homo sapiens (Human), this protein is Nucleosome assembly protein 1-like 2 (NAP1L2).